Consider the following 473-residue polypeptide: Argininosuccinate lyase (473 aa).

Belongs to the lyase 1 family. Argininosuccinate lyase subfamily.

The protein resides in the cytoplasm. It catalyses the reaction 2-(N(omega)-L-arginino)succinate = fumarate + L-arginine. It functions in the pathway amino-acid biosynthesis; L-arginine biosynthesis; L-arginine from L-ornithine and carbamoyl phosphate: step 3/3. This Chelativorans sp. (strain BNC1) protein is Argininosuccinate lyase.